A 291-amino-acid polypeptide reads, in one-letter code: Taste receptor type 2 member 16 (291 aa).

M1 is a topological domain (extracellular). The helical transmembrane segment at 2 to 22 threads the bilayer; the sequence is IPIQLTVFFMIIYVLESLTII. Topologically, residues 23-41 are cytoplasmic; the sequence is VQSSLIVAVLGREWLQVRR. The helical transmembrane segment at 42-62 threads the bilayer; the sequence is LMPVDMILISLGISRFCLQWA. Residues 63-84 are Extracellular-facing; the sequence is SMLNNFCSYLNLNYVLCNLTIT. An N-linked (GlcNAc...) asparagine glycan is attached at N80. The chain crosses the membrane as a helical span at residues 85 to 105; sequence WEFFNILTFWLNSLLTVFYCI. The Cytoplasmic segment spans residues 106-125; that stretch reads KVSSFTHHIFLWVRWRILRW. Residues 126-146 traverse the membrane as a helical segment; that stretch reads FPWILLGSLTIACVTIIPSAI. At 147 to 182 the chain is on the extracellular side; the sequence is GNYIQIQLLTMEHLPRNSTVTDRLEKFHQYQFQSHT. The N-linked (GlcNAc...) asparagine glycan is linked to N163. The chain crosses the membrane as a helical span at residues 183–203; it reads VALVIPFILFLASTILLMASL. Residues 204–228 lie on the Cytoplasmic side of the membrane; it reads TKQIQHHSTGHCNPSMKAHFTALRS. The chain crosses the membrane as a helical span at residues 229 to 249; sequence LAILFIVFTSYFLIILITIIG. The Extracellular portion of the chain corresponds to 250 to 257; sequence TLFDKRCW. The chain crosses the membrane as a helical span at residues 258–278; the sequence is LWVWEAFVYAFILMHSTSLML. At 279-291 the chain is on the cytoplasmic side; the sequence is SSPTLKRILKGKC.

Belongs to the G-protein coupled receptor T2R family. As to quaternary structure, interacts with RTP3 and RTP4.

It localises to the cell membrane. Its function is as follows. Receptor that may play a role in the perception of bitterness and is gustducin-linked. May function as a bitter taste receptor for the phytonutrient beta glucopyranosides, some of which are toxic and some of which lower the risk of cancer and cardiovascular disease. The activity of this receptor may stimulate alpha gustducin, mediate PLC-beta-2 activation and lead to the gating of TRPM5. This chain is Taste receptor type 2 member 16 (TAS2R16), found in Pongo pygmaeus (Bornean orangutan).